We begin with the raw amino-acid sequence, 165 residues long: UPF0669 protein v1g209471 (165 aa).

An N-terminal signal peptide occupies residues methionine 1–cysteine 23. An N-linked (GlcNAc...) asparagine glycan is attached at asparagine 38.

It belongs to the UPF0669 family.

The protein localises to the secreted. The sequence is that of UPF0669 protein v1g209471 from Nematostella vectensis (Starlet sea anemone).